A 308-amino-acid chain; its full sequence is Porphobilinogen deaminase (308 aa).

Cys-241 is modified (S-(dipyrrolylmethanemethyl)cysteine).

It belongs to the HMBS family. In terms of assembly, monomer. Requires dipyrromethane as cofactor.

The enzyme catalyses 4 porphobilinogen + H2O = hydroxymethylbilane + 4 NH4(+). It participates in porphyrin-containing compound metabolism; protoporphyrin-IX biosynthesis; coproporphyrinogen-III from 5-aminolevulinate: step 2/4. Functionally, tetrapolymerization of the monopyrrole PBG into the hydroxymethylbilane pre-uroporphyrinogen in several discrete steps. This is Porphobilinogen deaminase from Staphylococcus aureus (strain MSSA476).